A 653-amino-acid chain; its full sequence is NADH-ubiquinone oxidoreductase chain 5 (653 aa).

16 helical membrane-spanning segments follow: residues 1-21, 30-50, 81-103, 120-140, 177-197, 200-220, 241-261, 274-294, 301-319, 331-351, 365-385, 403-423, 452-472, 511-531, 610-630, and 631-651; these read MYLV…FFGR, LITS…FFEV, LTVS…SIGY, FTFM…FLGV, FLTI…YSTV, LAPY…LIGA, TPVS…YLLM, LILC…IGLF, VIAY…AIGL, NHAF…HSVS, FLPL…AIPF, FYIS…FTTL, IFIN…GYLT, LLPL…SEFF, GVIT…VFLL, and YLNI…STIN.

This sequence belongs to the complex I subunit 5 family.

It is found in the mitochondrion inner membrane. The enzyme catalyses a ubiquinone + NADH + 5 H(+)(in) = a ubiquinol + NAD(+) + 4 H(+)(out). Core subunit of the mitochondrial membrane respiratory chain NADH dehydrogenase (Complex I) that is believed to belong to the minimal assembly required for catalysis. Complex I functions in the transfer of electrons from NADH to the respiratory chain. The immediate electron acceptor for the enzyme is believed to be ubiquinone. The protein is NADH-ubiquinone oxidoreductase chain 5 (ND5) of Trichophyton rubrum (Athlete's foot fungus).